The chain runs to 141 residues: Large ribosomal subunit protein uL11 (141 aa).

It belongs to the universal ribosomal protein uL11 family. In terms of assembly, part of the ribosomal stalk of the 50S ribosomal subunit. Interacts with L10 and the large rRNA to form the base of the stalk. L10 forms an elongated spine to which L12 dimers bind in a sequential fashion forming a multimeric L10(L12)X complex. One or more lysine residues are methylated.

Forms part of the ribosomal stalk which helps the ribosome interact with GTP-bound translation factors. This chain is Large ribosomal subunit protein uL11, found in Streptococcus pneumoniae (strain Hungary19A-6).